Consider the following 132-residue polypeptide: MKRSGIINREIARIAAEMGHMDRITVCDCGFPIPDGAKVVDLSIIKGFPRLIDVLKALREELIIEKIILAKEIVDKNPEMHNAILKLFSDAAVDYVEHSEFKKIAAVSSKAYIRTGEATPYSNVILSSGVDF.

Catalysis depends on H20, which acts as the Proton donor. Substrate contacts are provided by residues D28, H98, and 121–123 (YSN).

It belongs to the RbsD / FucU family. RbsD subfamily. As to quaternary structure, homodecamer.

Its subcellular location is the cytoplasm. The enzyme catalyses beta-D-ribopyranose = beta-D-ribofuranose. Its pathway is carbohydrate metabolism; D-ribose degradation; D-ribose 5-phosphate from beta-D-ribopyranose: step 1/2. Catalyzes the interconversion of beta-pyran and beta-furan forms of D-ribose. The polypeptide is D-ribose pyranase (Kosmotoga olearia (strain ATCC BAA-1733 / DSM 21960 / TBF 19.5.1)).